The sequence spans 157 residues: SsrA-binding protein (157 aa).

The interval 131–157 (KQLHDKRDTEKKRDWSREKGRIMRARG) is disordered. Basic and acidic residues predominate over residues 132-151 (QLHDKRDTEKKRDWSREKGR).

This sequence belongs to the SmpB family.

The protein localises to the cytoplasm. Required for rescue of stalled ribosomes mediated by trans-translation. Binds to transfer-messenger RNA (tmRNA), required for stable association of tmRNA with ribosomes. tmRNA and SmpB together mimic tRNA shape, replacing the anticodon stem-loop with SmpB. tmRNA is encoded by the ssrA gene; the 2 termini fold to resemble tRNA(Ala) and it encodes a 'tag peptide', a short internal open reading frame. During trans-translation Ala-aminoacylated tmRNA acts like a tRNA, entering the A-site of stalled ribosomes, displacing the stalled mRNA. The ribosome then switches to translate the ORF on the tmRNA; the nascent peptide is terminated with the 'tag peptide' encoded by the tmRNA and targeted for degradation. The ribosome is freed to recommence translation, which seems to be the essential function of trans-translation. The chain is SsrA-binding protein from Rhodopseudomonas palustris (strain BisB18).